The chain runs to 468 residues: Tubulin gamma chain (468 aa).

142–148 (AGGTGSG) provides a ligand contact to GTP.

The protein belongs to the tubulin family.

It localises to the cytoplasm. It is found in the cytoskeleton. Its subcellular location is the microtubule organizing center. Its function is as follows. Tubulin is the major constituent of microtubules. The gamma chain is found at microtubule organizing centers (MTOC) such as the spindle poles, suggesting that it is involved in the minus-end nucleation of microtubule assembly. The sequence is that of Tubulin gamma chain (TUBG) from Chlamydomonas reinhardtii (Chlamydomonas smithii).